We begin with the raw amino-acid sequence, 324 residues long: Phospho-N-acetylmuramoyl-pentapeptide-transferase (324 aa).

10 helical membrane passes run 5–25 (VILFTIIMGFLISVLLSPIFI), 52–72 (PTMGGVMIILSIIATTIVMTM), 77–97 (VSMNMILLLFVTVGYGLLGFL), 117–137 (LIGQIVIALVFYAVYHFQGMP), 147–167 (LSFDFGWIYPVLVIFMLVGGS), 176–196 (LDGLLSGTAAIAFGAFAILAW), 203–223 (VAIFAVAVVGAVLGFLVFNAH), 227–247 (VFMGDTGSLALGGAIVTIAIL), 250–270 (LEILLVIIGGVFVIETLSVIL), and 302–322 (VVVTFWTAGLLLAVLGIYIEV).

The protein belongs to the glycosyltransferase 4 family. MraY subfamily. Mg(2+) serves as cofactor.

It is found in the cell membrane. The catalysed reaction is UDP-N-acetyl-alpha-D-muramoyl-L-alanyl-gamma-D-glutamyl-meso-2,6-diaminopimeloyl-D-alanyl-D-alanine + di-trans,octa-cis-undecaprenyl phosphate = di-trans,octa-cis-undecaprenyl diphospho-N-acetyl-alpha-D-muramoyl-L-alanyl-D-glutamyl-meso-2,6-diaminopimeloyl-D-alanyl-D-alanine + UMP. It participates in cell wall biogenesis; peptidoglycan biosynthesis. Catalyzes the initial step of the lipid cycle reactions in the biosynthesis of the cell wall peptidoglycan: transfers peptidoglycan precursor phospho-MurNAc-pentapeptide from UDP-MurNAc-pentapeptide onto the lipid carrier undecaprenyl phosphate, yielding undecaprenyl-pyrophosphoryl-MurNAc-pentapeptide, known as lipid I. This Bacillus licheniformis (strain ATCC 14580 / DSM 13 / JCM 2505 / CCUG 7422 / NBRC 12200 / NCIMB 9375 / NCTC 10341 / NRRL NRS-1264 / Gibson 46) protein is Phospho-N-acetylmuramoyl-pentapeptide-transferase.